The sequence spans 473 residues: Photosystem II CP43 reaction center protein (473 aa).

Positions 1–14 (MKTLYSLRRFYPVE) are excised as a propeptide. Thr-15 is modified (N-acetylthreonine). Thr-15 carries the phosphothreonine modification. Transmembrane regions (helical) follow at residues 69-93 (LFEV…PHLA), 134-155 (LLGP…KDRN), 178-200 (KALY…RKIT), 255-275 (KPFA…LSYS), and 291-312 (WFNN…ASQA). Glu-367 is a [CaMn4O5] cluster binding site. A helical membrane pass occupies residues 447-471 (RARAAAAGFEKGIDRDFEPVLSMTP).

It belongs to the PsbB/PsbC family. PsbC subfamily. In terms of assembly, PSII is composed of 1 copy each of membrane proteins PsbA, PsbB, PsbC, PsbD, PsbE, PsbF, PsbH, PsbI, PsbJ, PsbK, PsbL, PsbM, PsbT, PsbX, PsbY, PsbZ, Psb30/Ycf12, at least 3 peripheral proteins of the oxygen-evolving complex and a large number of cofactors. It forms dimeric complexes. The cofactor is Binds multiple chlorophylls and provides some of the ligands for the Ca-4Mn-5O cluster of the oxygen-evolving complex. It may also provide a ligand for a Cl- that is required for oxygen evolution. PSII binds additional chlorophylls, carotenoids and specific lipids..

The protein localises to the plastid. It localises to the chloroplast thylakoid membrane. One of the components of the core complex of photosystem II (PSII). It binds chlorophyll and helps catalyze the primary light-induced photochemical processes of PSII. PSII is a light-driven water:plastoquinone oxidoreductase, using light energy to abstract electrons from H(2)O, generating O(2) and a proton gradient subsequently used for ATP formation. This chain is Photosystem II CP43 reaction center protein, found in Liriodendron tulipifera (Tuliptree).